Reading from the N-terminus, the 735-residue chain is Muskelin (735 aa).

A2 bears the N-acetylalanine mark. The LisH domain maps to 172 to 204; it reads REQEAIRLCLKHFRQHNYTEAFESLQKKTKIAL. The CTLH domain occupies 206–258; sequence HPMLTDIHDKLVLKGDFDACEELIEKAVNDGLFNQYISQQEYKPRWSQIIPKS. Kelch repeat units lie at residues 284–330, 339–391, 408–458, 469–515, 526–578, and 597–651; these read TVYL…SCHK, QIYT…FDHQ, ILTC…SRIG, CLYV…TGFT, EIHV…SLQE, and VHYL…AQVD.

Homodimer; may form higher oligomers. Identified in the CTLH complex that contains GID4, RANBP9 and/or RANBP10, MKLN1, MAEA, RMND5A (or alternatively its paralog RMND5B), GID8, ARMC8, WDR26 and YPEL5. Within this complex, MAEA, RMND5A (or alternatively its paralog RMND5B), GID8, WDR26, and RANBP9 and/or RANBP10 form the catalytic core, while GID4, MKLN1, ARMC8 and YPEL5 have ancillary roles. Interacts with RANBP9. Part of a complex consisting of RANBP9, MKLN1 and GID8. Interacts with GABRA1. Interacts with the C-terminal tail of PTGER3.

The protein resides in the cytoplasm. It localises to the cytosol. It is found in the nucleus. Its subcellular location is the nucleoplasm. The protein localises to the cell projection. The protein resides in the ruffle. It localises to the cell cortex. It is found in the synapse. Its subcellular location is the postsynapse. Functionally, component of the CTLH E3 ubiquitin-protein ligase complex that selectively accepts ubiquitin from UBE2H and mediates ubiquitination and subsequent proteasomal degradation of the transcription factor HBP1. Required for internalization of the GABA receptor GABRA1 from the cell membrane via endosomes and subsequent GABRA1 degradation. Acts as a mediator of cell spreading and cytoskeletal responses to the extracellular matrix component THBS1. In Homo sapiens (Human), this protein is Muskelin (MKLN1).